Reading from the N-terminus, the 363-residue chain is Peroxin-36 (363 aa).

Residues 1-193 (MSNLEKQIRL…ESFFINSFEQ (193 aa)) are Cytoplasmic-facing. Disordered stretches follow at residues 71-114 (QNHQ…DTST) and 128-157 (TNSNESQSKGRPSEYTHVNSPDSGVSSKSG). Over residues 97–114 (VDSNSDSSSSETLIDTST) the composition is skewed to low complexity. Residues 194–213 (LIALFDNFYFLSSLIGFNTS) traverse the membrane as a helical segment. The Peroxisomal portion of the chain corresponds to 214–232 (NSNSKITRLLRNFIKQASK). A helical transmembrane segment spans residues 233–250 (IWLVIIFLTVKNLFIRMI). The Cytoplasmic portion of the chain corresponds to 251–363 (KLNRTEKKVK…SSDDIIDEYA (113 aa)).

Its subcellular location is the peroxisome membrane. Controls peroxisome morphology and abundance under conditions of peroxisome proliferation such as oleate and methanol media. Has additional function(s), which is not present in its functional homologs such as Saccharomyces cerevisea PEX34 or human PEX16. This chain is Peroxin-36, found in Komagataella phaffii (strain GS115 / ATCC 20864) (Yeast).